The chain runs to 974 residues: Phosphoenolpyruvate carboxylase 1 (974 aa).

Residues histidine 164 and lysine 604 contribute to the active site.

The protein belongs to the PEPCase type 1 family. As to quaternary structure, exists as a homotetramer or heterooligomer. The cofactor is Mg(2+).

The protein resides in the cytoplasm. It catalyses the reaction oxaloacetate + phosphate = phosphoenolpyruvate + hydrogencarbonate. Its activity is regulated as follows. Activated by glutamine and dihydroxyacetone phosphate. Inhibited by glutamate, aspartate, 2-oxoglutarate and malate. In terms of biological role, through the carboxylation of phosphoenolpyruvate (PEP) it forms oxaloacetate, a four-carbon dicarboxylic acid source for the tricarboxylic acid cycle. The sequence is that of Phosphoenolpyruvate carboxylase 1 from Chlamydomonas reinhardtii (Chlamydomonas smithii).